A 197-amino-acid polypeptide reads, in one-letter code: Dephospho-CoA kinase (197 aa).

A DPCK domain is found at 2–197; that stretch reads RIGLTGGIAS…YDALAKTAHE (196 aa). 10–15 serves as a coordination point for ATP; that stretch reads ASGKSL.

It belongs to the CoaE family.

The protein resides in the cytoplasm. It catalyses the reaction 3'-dephospho-CoA + ATP = ADP + CoA + H(+). It participates in cofactor biosynthesis; coenzyme A biosynthesis; CoA from (R)-pantothenate: step 5/5. Catalyzes the phosphorylation of the 3'-hydroxyl group of dephosphocoenzyme A to form coenzyme A. In Shouchella clausii (strain KSM-K16) (Alkalihalobacillus clausii), this protein is Dephospho-CoA kinase.